We begin with the raw amino-acid sequence, 228 residues long: Ephrin-A5 (228 aa).

The signal sequence occupies residues 1-20 (MLHVEMLTLLFLVLWMCVFS). In terms of domain architecture, Ephrin RBD spans 29 to 162 (ADRYAVYWNS…KLKVFVRPTN (134 aa)). A glycan (N-linked (GlcNAc...) asparagine) is linked at Asn-37. 2 disulfide bridges follow: Cys-62/Cys-102 and Cys-90/Cys-151. A glycan (N-linked (GlcNAc...) asparagine; atypical) is linked at Asn-162. The segment at 186 to 205 (EPADDTVHESAEPSRGENAA) is disordered. Residues 190 to 200 (DTVHESAEPSR) are compositionally biased toward basic and acidic residues. Asn-203 carries GPI-anchor amidated asparagine lipidation. Positions 204 to 228 (AAQTPRIPSRLLAILLFLLAMLLTL) are cleaved as a propeptide — removed in mature form.

This sequence belongs to the ephrin family. In terms of assembly, binds to the receptor tyrosine kinases EPHA2, EPHA3 and EPHB1. Forms a ternary EFNA5-EPHA3-ADAM10 complex mediating EFNA5 extracellular domain shedding by ADAM10 which regulates the EFNA5-EPHA3 complex internalization and function. Binds to EPHB2. Interacts with EPHA8; activates EPHA8. As to expression, expressed in myogenic progenitor cells.

Its subcellular location is the cell membrane. It localises to the membrane. The protein resides in the caveola. Functionally, cell surface GPI-bound ligand for Eph receptors, a family of receptor tyrosine kinases which are crucial for migration, repulsion and adhesion during neuronal, vascular and epithelial development. Binds promiscuously Eph receptors residing on adjacent cells, leading to contact-dependent bidirectional signaling into neighboring cells. The signaling pathway downstream of the receptor is referred to as forward signaling while the signaling pathway downstream of the ephrin ligand is referred to as reverse signaling. Induces compartmentalized signaling within a caveolae-like membrane microdomain when bound to the extracellular domain of its cognate receptor. This signaling event requires the activity of the Fyn tyrosine kinase. Activates the EPHA3 receptor to regulate cell-cell adhesion and cytoskeletal organization. With the receptor EPHA2 may regulate lens fiber cells shape and interactions and be important for lens transparency maintenance. May function actively to stimulate axon fasciculation. The interaction of EFNA5 with EPHA5 also mediates communication between pancreatic islet cells to regulate glucose-stimulated insulin secretion. Cognate/functional ligand for EPHA7, their interaction regulates brain development modulating cell-cell adhesion and repulsion. In Mus musculus (Mouse), this protein is Ephrin-A5 (Efna5).